The chain runs to 215 residues: Cytochrome b6 (215 aa).

Residues 32–52 (IFYCLGGITLTCFIVQVATGF) form a helical membrane-spanning segment. Cysteine 35 is a heme c binding site. Residues histidine 86 and histidine 100 each contribute to the heme b site. The next 3 membrane-spanning stretches (helical) occupy residues 90-110 (ASMM…TGGF), 116-136 (LTWI…VTGY), and 186-206 (LHTF…FLMI). Heme b contacts are provided by histidine 187 and histidine 202.

It belongs to the cytochrome b family. PetB subfamily. In terms of assembly, the 4 large subunits of the cytochrome b6-f complex are cytochrome b6, subunit IV (17 kDa polypeptide, PetD), cytochrome f and the Rieske protein, while the 4 small subunits are PetG, PetL, PetM and PetN. The complex functions as a dimer. Heme b serves as cofactor. Requires heme c as cofactor.

It localises to the plastid. The protein localises to the chloroplast thylakoid membrane. In terms of biological role, component of the cytochrome b6-f complex, which mediates electron transfer between photosystem II (PSII) and photosystem I (PSI), cyclic electron flow around PSI, and state transitions. This Chara vulgaris (Common stonewort) protein is Cytochrome b6.